Reading from the N-terminus, the 615-residue chain is Elongation factor 4 (615 aa).

Positions 17 to 198 (ASIRNFCIIA…RVSRTIPAPV (182 aa)) constitute a tr-type G domain. GTP contacts are provided by residues 29 to 34 (DHGKST) and 145 to 148 (NKID).

The protein belongs to the TRAFAC class translation factor GTPase superfamily. Classic translation factor GTPase family. LepA subfamily.

The protein resides in the cell membrane. It catalyses the reaction GTP + H2O = GDP + phosphate + H(+). Its function is as follows. Required for accurate and efficient protein synthesis under certain stress conditions. May act as a fidelity factor of the translation reaction, by catalyzing a one-codon backward translocation of tRNAs on improperly translocated ribosomes. Back-translocation proceeds from a post-translocation (POST) complex to a pre-translocation (PRE) complex, thus giving elongation factor G a second chance to translocate the tRNAs correctly. Binds to ribosomes in a GTP-dependent manner. The polypeptide is Elongation factor 4 (Clavibacter sepedonicus (Clavibacter michiganensis subsp. sepedonicus)).